Reading from the N-terminus, the 154-residue chain is MLKQITLYTDGSCLGNPGPGGYAAVLIYKQHRKELAQGYELTTNNRMELMAAIAGLQSLSEPCQVRLTTDSQYVRQGITQWIHGWKKKGWKTANREPVKNVDLWLLLDSEIQRHDVEWFWVKGHSGHPENERCDELARNAALADSRLIDSGYPS.

One can recognise an RNase H type-1 domain in the interval 1 to 142 (MLKQITLYTD…CDELARNAAL (142 aa)). 4 residues coordinate Mg(2+): Asp10, Glu48, Asp70, and Asp134.

This sequence belongs to the RNase H family. As to quaternary structure, monomer. Mg(2+) serves as cofactor.

It localises to the cytoplasm. It catalyses the reaction Endonucleolytic cleavage to 5'-phosphomonoester.. In terms of biological role, endonuclease that specifically degrades the RNA of RNA-DNA hybrids. The protein is Ribonuclease H of Tolumonas auensis (strain DSM 9187 / NBRC 110442 / TA 4).